A 1425-amino-acid chain; its full sequence is Protein NAP1 (1425 aa).

Polar residues-rich tracts occupy residues 1–20 (MANS…PTSV), 1299–1312 (TPLS…SPSV), and 1320–1329 (SMKNSTTPQR). 2 disordered regions span residues 1–24 (MANS…RSRE) and 1299–1425 (TPLS…KQHN). The segment covering 1362 to 1405 (SETGNSRNNENNNNNKQRGSSRRSGPLDYSSSHKGGSGSNSTGP) has biased composition (low complexity).

The protein belongs to the HEM-1/HEM-2 family. As to quaternary structure, binds PIR. As to expression, expressed in roots, root hairs, hypocotyls, cotyledons, stems, leaves, trichomes, and flowers.

Involved in regulation of actin and microtubule organization. Part of a WAVE complex that activates the Arp2/3 complex. The protein is Protein NAP1 (NAP1) of Arabidopsis thaliana (Mouse-ear cress).